Reading from the N-terminus, the 54-residue chain is Beta-2-microglobulin (54 aa).

Positions 3–41 (KVELSDLSFNKDWSFYLLAHREFVPTATDKYACRVSHIT) constitute an Ig-like C1-type domain.

The protein belongs to the beta-2-microglobulin family. In terms of assembly, heterodimer of an alpha chain and a beta chain. Beta-2-microglobulin is the beta-chain of major histocompatibility complex class I molecules.

It localises to the secreted. Functionally, component of the class I major histocompatibility complex (MHC). Involved in the presentation of peptide antigens to the immune system. This Mesocricetus auratus (Golden hamster) protein is Beta-2-microglobulin (B2M).